We begin with the raw amino-acid sequence, 148 residues long: MPSRLRKTRKLRGHVSHGHGRIGKHRKHPGGRGNAGGLHHHRINFDKYHPGYFGKVGMKHYHLKRNQSFCPTVNLDKLWTLVSEQTRVNAAKNKTGAAPIIDVVRSGYYKVLGKGKLPKQPVIVKAKFFSRRAEEKIKSVGGACVLVA.

Residues 1–30 (MPSRLRKTRKLRGHVSHGHGRIGKHRKHPG) show a composition bias toward basic residues. Residues 1-38 (MPSRLRKTRKLRGHVSHGHGRIGKHRKHPGGRGNAGGL) are disordered. His-39 is subject to (3S)-3-hydroxyhistidine. 2 positions are modified to N6-acetyllysine: Lys-47 and Lys-55. A Phosphoserine modification is found at Ser-68. Lys-110 carries the N6-acetyllysine modification.

Belongs to the universal ribosomal protein uL15 family. As to quaternary structure, component of the large ribosomal subunit. Post-translationally, hydroxylated on His-39 by MINA.

It is found in the cytoplasm. Functionally, component of the large ribosomal subunit. The ribosome is a large ribonucleoprotein complex responsible for the synthesis of proteins in the cell. This chain is Large ribosomal subunit protein uL15 (RPL27A), found in Homo sapiens (Human).